Reading from the N-terminus, the 448-residue chain is 26S proteasome regulatory subunit 4 homolog (448 aa).

The span at 1–16 shows a compositional bias: gly residues; sequence MGQGTPGGMGKQGGAP. Disordered stretches follow at residues 1–56 and 93–112; these read MGQG…AAAR and LRPT…DLRG. Composition is skewed to basic and acidic residues over residues 17-33 and 93-111; these read GDRK…RKFE and LRPT…DDLR. 234–241 lines the ATP pocket; it reads GEPGTGKT.

The protein belongs to the AAA ATPase family.

It is found in the cytoplasm. It localises to the nucleus. The 26S proteasome is involved in the ATP-dependent degradation of ubiquitinated proteins. The regulatory (or ATPase) complex confers ATP dependency and substrate specificity to the 26S complex. This chain is 26S proteasome regulatory subunit 4 homolog (TBP2), found in Oryza sativa subsp. japonica (Rice).